Consider the following 531-residue polypeptide: MTSLTTQTLIITIFLLTIPTSFASPPSLEDVFAQCVTDFKPSNPKSPIQNYIYTQRSPNFLTILNNYVRNLRYFNNMTRKPVAIVAAADVTHIQATITCAKKLGLQLRIRSGGHDYDGMSYLSTIDFVVLDMFNLRSINIDPKLDTAWVQSGATLGEIYYGVANKSNDLRGFPAGICPGLGAGGHFSGGGYGNMMRKYGLSIDNIIDAKIVDAKGRVLDRSSMGEDLFWALRGGGAASFCVVLAWKIKLVPVPAKVTVFNIETFGNTGSVNTTELVAKWQEIADKIDNDLFIRLTLGSSNKTVKASFMGMYLGNSSNLLEIMNAKFPELGLIKRECIEMKWIESVLFWLGIPPGTAPTTSMLNRIPQKQIYLKRKSDYVQKPISRTGLESIFKIMTENENVTMAFNPYGGRMSEIPSTETAFPHRAGNMFKIQYAANWFVPGEAVAKDCLSQTERLFEAMSPYVSKNPREAFLNYRDVDIGKSLNSTYEEGKVYGFKYFKDNFEKLVKIKSRVDPDNFFRYEQSIPVLSSH.

The first 23 residues, 1-23, serve as a signal peptide directing secretion; sequence MTSLTTQTLIITIFLLTIPTSFA. Cysteines 35 and 99 form a disulfide. N-linked (GlcNAc...) asparagine glycans are attached at residues Asn76, Asn164, Asn271, Asn300, Asn314, Asn400, and Asn485. Positions 77 to 252 constitute an FAD-binding PCMH-type domain; that stretch reads MTRKPVAIVA…LAWKIKLVPV (176 aa). The 6-(S-cysteinyl)-8alpha-(pros-histidyl)-FAD (His-Cys) cross-link spans 114 to 177; that stretch reads HDYDGMSYLS…DLRGFPAGIC (64 aa).

This sequence belongs to the oxygen-dependent FAD-linked oxidoreductase family. The cofactor is FAD. The FAD cofactor is bound via a bicovalent 6-S-cysteinyl, 8alpha-N1-histidyl FAD linkage. As to expression, accumulates in cell walls of etiolated hypocotyls.

Its subcellular location is the secreted. It is found in the cell wall. In Arabidopsis thaliana (Mouse-ear cress), this protein is Berberine bridge enzyme-like 9.